Consider the following 506-residue polypeptide: Galactose/methyl galactoside import ATP-binding protein MglA (506 aa).

2 ABC transporter domains span residues 14–249 (LEMS…VGRS) and 264–506 (VILE…SLHL). 46-53 (GENGAGKS) provides a ligand contact to ATP.

It belongs to the ABC transporter superfamily. Galactose/methyl galactoside importer (TC 3.A.1.2.3) family. In terms of assembly, the complex is composed of one ATP-binding protein (MglA), two transmembrane proteins (MglC) and a solute-binding protein (MglB).

The protein localises to the cell inner membrane. It carries out the reaction D-galactose(out) + ATP + H2O = D-galactose(in) + ADP + phosphate + H(+). It catalyses the reaction methyl beta-D-galactoside(out) + ATP + H2O = methyl beta-D-galactoside(in) + ADP + phosphate + H(+). In terms of biological role, part of the ABC transporter complex MglABC involved in galactose/methyl galactoside import. Responsible for energy coupling to the transport system. The protein is Galactose/methyl galactoside import ATP-binding protein MglA of Shigella flexneri serotype 5b (strain 8401).